The chain runs to 257 residues: HTH-type transcriptional activator mta (257 aa).

Positions 2-71 constitute an HTH merR-type domain; it reads KYQVKQVAEI…LDEIKEMLDH (70 aa). Positions 5 to 24 form a DNA-binding region, H-T-H motif; the sequence is VKQVAEISGVSIRTLHHYDN. The interval 71 to 74 is hinge; it reads HPNF. The essential for dimerization stretch occupies residues 76-104; that stretch reads RKAALQSQKEILMKKKQRMDEMIQTIDRT. A coiled-coil region spans residues 76 to 107; it reads RKAALQSQKEILMKKKQRMDEMIQTIDRTLLS.

In terms of assembly, homodimer.

The protein resides in the cytoplasm. In terms of biological role, global transcriptional regulator that activates transcription of bmr and blt by binding directly to their promoter. Also stimulates the expression of the mta gene itself, ydfK and ymfE. The chain is HTH-type transcriptional activator mta (mta) from Bacillus subtilis (strain 168).